The chain runs to 207 residues: Glycerol-3-phosphate acyltransferase (207 aa).

A run of 5 helical transmembrane segments spans residues 4-24 (VVAT…SFAV), 58-78 (ILTL…AQWL), 86-106 (ETGI…PVFH), 120-140 (ILLA…LIIA), and 162-182 (VLMN…VLLI).

The protein belongs to the PlsY family. Probably interacts with PlsX.

The protein localises to the cell inner membrane. It carries out the reaction an acyl phosphate + sn-glycerol 3-phosphate = a 1-acyl-sn-glycero-3-phosphate + phosphate. Its pathway is lipid metabolism; phospholipid metabolism. Functionally, catalyzes the transfer of an acyl group from acyl-phosphate (acyl-PO(4)) to glycerol-3-phosphate (G3P) to form lysophosphatidic acid (LPA). This enzyme utilizes acyl-phosphate as fatty acyl donor, but not acyl-CoA or acyl-ACP. The chain is Glycerol-3-phosphate acyltransferase from Ralstonia pickettii (strain 12J).